Here is a 506-residue protein sequence, read N- to C-terminus: ATP synthase subunit alpha, chloroplastic (506 aa).

Position 172–179 (172–179 (GDRQTGKT)) interacts with ATP.

The protein belongs to the ATPase alpha/beta chains family. F-type ATPases have 2 components, CF(1) - the catalytic core - and CF(0) - the membrane proton channel. CF(1) has five subunits: alpha(3), beta(3), gamma(1), delta(1), epsilon(1). CF(0) has four main subunits: a, b, b' and c.

It localises to the plastid. The protein localises to the chloroplast thylakoid membrane. The catalysed reaction is ATP + H2O + 4 H(+)(in) = ADP + phosphate + 5 H(+)(out). In terms of biological role, produces ATP from ADP in the presence of a proton gradient across the membrane. The alpha chain is a regulatory subunit. This chain is ATP synthase subunit alpha, chloroplastic, found in Pleurastrum terricola (Filamentous green alga).